Consider the following 346-residue polypeptide: NADH-ubiquinone oxidoreductase chain 2 (346 aa).

11 consecutive transmembrane segments (helical) span residues 1–21 (MNPH…TITI), 25–45 (HWVL…PLIS), 60–80 (FLTQ…NAWA), 95–115 (CLLL…HFWF), 124–144 (LMTA…LLLM), 149–169 (LNPA…GWMG), 178–195 (ILAF…IILV), 200–219 (LALL…FMAL), 242–262 (ATLM…GFMP), 274–294 (EMTP…FFYL), and 326–346 (AILA…HAIV).

The protein belongs to the complex I subunit 2 family.

Its subcellular location is the mitochondrion inner membrane. It catalyses the reaction a ubiquinone + NADH + 5 H(+)(in) = a ubiquinol + NAD(+) + 4 H(+)(out). Functionally, core subunit of the mitochondrial membrane respiratory chain NADH dehydrogenase (Complex I) that is believed to belong to the minimal assembly required for catalysis. Complex I functions in the transfer of electrons from NADH to the respiratory chain. The immediate electron acceptor for the enzyme is believed to be ubiquinone. This chain is NADH-ubiquinone oxidoreductase chain 2 (MT-ND2), found in Anas acuta (Northern pintail).